The chain runs to 262 residues: Cytochrome c oxidase subunit 3 (262 aa).

The next 6 membrane-spanning stretches (helical) occupy residues 39-59 (YTMT…YQWW), 83-103 (GMIL…WAFF), 120-140 (VGII…ILLA), 163-183 (GLFF…YEYI), 201-221 (ATGF…ICFL), and 240-260 (AWYW…IYWW).

This sequence belongs to the cytochrome c oxidase subunit 3 family. In terms of assembly, component of the cytochrome c oxidase (complex IV, CIV), a multisubunit enzyme composed of a catalytic core of 3 subunits and several supernumerary subunits. The complex exists as a monomer or a dimer and forms supercomplexes (SCs) in the inner mitochondrial membrane with ubiquinol-cytochrome c oxidoreductase (cytochrome b-c1 complex, complex III, CIII).

It is found in the mitochondrion inner membrane. It catalyses the reaction 4 Fe(II)-[cytochrome c] + O2 + 8 H(+)(in) = 4 Fe(III)-[cytochrome c] + 2 H2O + 4 H(+)(out). Functionally, component of the cytochrome c oxidase, the last enzyme in the mitochondrial electron transport chain which drives oxidative phosphorylation. The respiratory chain contains 3 multisubunit complexes succinate dehydrogenase (complex II, CII), ubiquinol-cytochrome c oxidoreductase (cytochrome b-c1 complex, complex III, CIII) and cytochrome c oxidase (complex IV, CIV), that cooperate to transfer electrons derived from NADH and succinate to molecular oxygen, creating an electrochemical gradient over the inner membrane that drives transmembrane transport and the ATP synthase. Cytochrome c oxidase is the component of the respiratory chain that catalyzes the reduction of oxygen to water. Electrons originating from reduced cytochrome c in the intermembrane space (IMS) are transferred via the dinuclear copper A center (CU(A)) of subunit 2 and heme A of subunit 1 to the active site in subunit 1, a binuclear center (BNC) formed by heme A3 and copper B (CU(B)). The BNC reduces molecular oxygen to 2 water molecules using 4 electrons from cytochrome c in the IMS and 4 protons from the mitochondrial matrix. The sequence is that of Cytochrome c oxidase subunit 3 (COIII) from Anopheles quadrimaculatus (Common malaria mosquito).